The following is a 344-amino-acid chain: Heat-inducible transcription repressor HrcA (344 aa).

It belongs to the HrcA family.

Negative regulator of class I heat shock genes (grpE-dnaK-dnaJ and groELS operons). Prevents heat-shock induction of these operons. This chain is Heat-inducible transcription repressor HrcA, found in Streptococcus equi subsp. zooepidemicus (strain H70).